Here is a 179-residue protein sequence, read N- to C-terminus: Large ribosomal subunit protein uL5 (179 aa).

It belongs to the universal ribosomal protein uL5 family. As to quaternary structure, part of the 50S ribosomal subunit; part of the 5S rRNA/L5/L18/L25 subcomplex. Contacts the 5S rRNA and the P site tRNA. Forms a bridge to the 30S subunit in the 70S ribosome.

This is one of the proteins that bind and probably mediate the attachment of the 5S RNA into the large ribosomal subunit, where it forms part of the central protuberance. In the 70S ribosome it contacts protein S13 of the 30S subunit (bridge B1b), connecting the 2 subunits; this bridge is implicated in subunit movement. Contacts the P site tRNA; the 5S rRNA and some of its associated proteins might help stabilize positioning of ribosome-bound tRNAs. The sequence is that of Large ribosomal subunit protein uL5 from Chromohalobacter salexigens (strain ATCC BAA-138 / DSM 3043 / CIP 106854 / NCIMB 13768 / 1H11).